The following is an 86-amino-acid chain: Small ribosomal subunit protein bS20 (86 aa).

Belongs to the bacterial ribosomal protein bS20 family.

Its function is as follows. Binds directly to 16S ribosomal RNA. The chain is Small ribosomal subunit protein bS20 from Aliarcobacter butzleri (strain RM4018) (Arcobacter butzleri).